The chain runs to 154 residues: S-ribosylhomocysteine lyase (154 aa).

The Fe cation site is built by H58, H62, and C125.

Belongs to the LuxS family. In terms of assembly, homodimer. It depends on Fe cation as a cofactor.

It catalyses the reaction S-(5-deoxy-D-ribos-5-yl)-L-homocysteine = (S)-4,5-dihydroxypentane-2,3-dione + L-homocysteine. Involved in the synthesis of autoinducer 2 (AI-2) which is secreted by bacteria and is used to communicate both the cell density and the metabolic potential of the environment. The regulation of gene expression in response to changes in cell density is called quorum sensing. Catalyzes the transformation of S-ribosylhomocysteine (RHC) to homocysteine (HC) and 4,5-dihydroxy-2,3-pentadione (DPD). The sequence is that of S-ribosylhomocysteine lyase from Dichelobacter nodosus (strain VCS1703A).